The chain runs to 950 residues: MLFSWREDPGAQCLLLSLLLLAASEVGSGQLHYSVSEEAKHGTFVGRIAQDLGLELAELVPRLFRVASKRHGDLLEVNLQNGILFVNSRIDREELCGRSAECSIHLEVIVDRPLQVFHVEVEVKDINDNAPVFPMAVKNLFISESRQPGSRFSLEGASDADIGTNSLLTYSLDSTEYFTLDVKRNDEEIKSLGLVLKKNLNREDTPKHYLLITAIDGGKPELTGTTQLKITVLDVNDNAPAFERTIYKVRLLENAPNGTLVVTVNATDLDEGVNKDIAYSFNTDMSADILSKFHLDPVNGQISVKGNIDFEESKSYEIQVEATDKGNPPMSDHCTVLLEIVDINDNVPELVIQSLSLPVLEDSPLSTVIALISVSDRDSGVNGQVTCSLTPHVPFKLVSTFKNYYSLVLDSPLDRESVSAYELVVTARDGGSPSLWATASVSVEVADVNDNAPAFSQSEYTVFVKENNPPGCHIFTVSARDADAQENALVSYSLVERRVGERALSSYVSVHAESGKVYALQPLDHEELELLQFQVSARDAGVPPLGSNVTLQVFVLDENDNAPALLMPRVGGIGGAVSELVPRSVGAGHVVAKVRAVDADSGYNAWLSYELQPGTGGARIPFRVGLYTGEISTTRALDEVDAPRHRLLVLVKDHGEPSLTATATVLVSLVESGQAPKASSQASAGATGPEAALVDVNVYLIVAICAVSSLLVLTLLLYTALRCSAPPTEGDCGPGKPTLVCSSAVGSWSYSQQRQQRVCSGEGLPKTDLMAFSPSLPPCPISRDREEKQDVDVDLSAKPRQPNPDWRYSASLRAGMHSSVHLEEAGILRAGPGGPDQQWPTVSSATPEPEAGEVSPPVGAGVNSNSWTFKYGPGNPKQSGPGELPDKFIIPGSPAIISIRQEPTNSQIDKSDFITFGKKEETKKKKKKKKGNKTQEKKEKGNSTTDNSDQ.

The signal sequence occupies residues Met-1–Gly-29. Cadherin domains lie at Gln-30–Phe-133, Pro-134–Phe-242, Glu-243–Leu-350, Val-351–Phe-455, Ser-456–Leu-565, and Val-581–Ala-678. Topologically, residues Gln-30–Asn-697 are extracellular. N-linked (GlcNAc...) asparagine glycosylation is found at Asn-257 and Asn-265. Asn-548 carries an N-linked (GlcNAc...) asparagine glycan. A helical membrane pass occupies residues Val-698–Tyr-718. The Cytoplasmic segment spans residues Thr-719–Gln-950. PXXP repeat units follow at residues Pro-734–Pro-737 and Pro-774–Pro-777. Positions Pro-734–Pro-894 are 6 X 4 AA repeats of P-X-X-P. Disordered stretches follow at residues Pro-777 to Trp-806, Gly-831 to Pro-856, and Phe-869 to Gln-950. Over residues Ser-782–Ala-797 the composition is skewed to basic and acidic residues. PXXP repeat units lie at residues Pro-799 to Pro-802, Pro-832 to Pro-835, Pro-873 to Pro-876, and Pro-891 to Pro-894. Over residues Asp-909–Lys-923 the composition is skewed to basic and acidic residues.

It is found in the cell membrane. Its function is as follows. Potential calcium-dependent cell-adhesion protein. May be involved in the establishment and maintenance of specific neuronal connections in the brain. The protein is Protocadherin alpha-3 (PCDHA3) of Homo sapiens (Human).